The primary structure comprises 264 residues: Putative hydro-lyase Cgl2544/cg2803 (264 aa).

The protein belongs to the D-glutamate cyclase family.

The protein is Putative hydro-lyase Cgl2544/cg2803 of Corynebacterium glutamicum (strain ATCC 13032 / DSM 20300 / JCM 1318 / BCRC 11384 / CCUG 27702 / LMG 3730 / NBRC 12168 / NCIMB 10025 / NRRL B-2784 / 534).